The chain runs to 559 residues: Innexin-10 (559 aa).

Transmembrane regions (helical) follow at residues 28 to 48 (YFTC…QFGG), 102 to 122 (QWVP…SLLW), 182 to 202 (FLWL…YLCT), and 283 to 303 (IFIL…GSFF). 2 disordered regions span residues 488–514 (EEKQ…YQNQ) and 527–559 (YRTP…STFK). The segment covering 503–514 (YTNQNPTPYQNQ) has biased composition (low complexity). The span at 528–559 (RTPSLSRGTDSRPVSTATDTDQTKKQSMSTFK) shows a compositional bias: polar residues.

It belongs to the pannexin family.

The protein localises to the cell membrane. Its subcellular location is the cell junction. It is found in the gap junction. Its function is as follows. Structural component of the gap junctions. This is Innexin-10 (inx-10) from Caenorhabditis elegans.